We begin with the raw amino-acid sequence, 245 residues long: MREALRSLLVALQFLTRLPVRLSAMPTPEQFGRAVLCYPLVGVLIGVVLYAAARSLDGTPPLLQAALLLSLWVALSGALHLDGLADMADAWVGGLGDRERTLAIMKDPRSGPVAVVVLVLVLLLKFSALAALLGQGEAGLLPLAPWLARSSLPLLFLTTPYARPGGLGQAIAEHLPARSLPWVLGGSFGLALAFGLAGLLALLVTLMLFAWLRSRFLARLGGTTGDTAGALVELTECAVLVALAL.

Helical transmembrane passes span 31 to 51 (FGRA…VLYA), 61 to 81 (PLLQ…ALHL), 113 to 133 (VAVV…AALL), 138 to 158 (AGLL…LFLT), and 192 to 212 (LAFG…FAWL).

The protein belongs to the CobS family. Mg(2+) serves as cofactor.

The protein localises to the cell inner membrane. It carries out the reaction alpha-ribazole + adenosylcob(III)inamide-GDP = adenosylcob(III)alamin + GMP + H(+). The catalysed reaction is alpha-ribazole 5'-phosphate + adenosylcob(III)inamide-GDP = adenosylcob(III)alamin 5'-phosphate + GMP + H(+). It functions in the pathway cofactor biosynthesis; adenosylcobalamin biosynthesis; adenosylcobalamin from cob(II)yrinate a,c-diamide: step 7/7. Functionally, joins adenosylcobinamide-GDP and alpha-ribazole to generate adenosylcobalamin (Ado-cobalamin). Also synthesizes adenosylcobalamin 5'-phosphate from adenosylcobinamide-GDP and alpha-ribazole 5'-phosphate. This chain is Adenosylcobinamide-GDP ribazoletransferase, found in Pseudomonas aeruginosa (strain UCBPP-PA14).